A 409-amino-acid chain; its full sequence is Putative competence-damage inducible protein (409 aa).

It belongs to the CinA family.

The polypeptide is Putative competence-damage inducible protein (Clostridium botulinum (strain Kyoto / Type A2)).